The primary structure comprises 44 residues: Putative keratin-associated protein 20-4 (44 aa).

This sequence belongs to the KRTAP type 20 family. As to quaternary structure, interacts with hair keratins.

In terms of biological role, in the hair cortex, hair keratin intermediate filaments are embedded in an interfilamentous matrix, consisting of hair keratin-associated proteins (KRTAP), which are essential for the formation of a rigid and resistant hair shaft through their extensive disulfide bond cross-linking with abundant cysteine residues of hair keratins. The matrix proteins include the high-sulfur and high-glycine-tyrosine keratins. This Homo sapiens (Human) protein is Putative keratin-associated protein 20-4 (KRTAP20-4).